A 445-amino-acid polypeptide reads, in one-letter code: Phosphoglucosamine mutase (445 aa).

The Phosphoserine intermediate role is filled by S102. Mg(2+) is bound by residues S102, D241, D243, and D245. The residue at position 102 (S102) is a Phosphoserine.

The protein belongs to the phosphohexose mutase family. It depends on Mg(2+) as a cofactor. In terms of processing, activated by phosphorylation.

It catalyses the reaction alpha-D-glucosamine 1-phosphate = D-glucosamine 6-phosphate. Functionally, catalyzes the conversion of glucosamine-6-phosphate to glucosamine-1-phosphate. The chain is Phosphoglucosamine mutase from Hahella chejuensis (strain KCTC 2396).